A 508-amino-acid chain; its full sequence is Photosystem II CP47 reaction center protein (508 aa).

6 consecutive transmembrane segments (helical) span residues serine 21–serine 36, isoleucine 101–tryptophan 115, glycine 140–phenylalanine 156, isoleucine 203–serine 218, valine 237–valine 252, and serine 457–arginine 472.

The protein belongs to the PsbB/PsbC family. PsbB subfamily. In terms of assembly, PSII is composed of 1 copy each of membrane proteins PsbA, PsbB, PsbC, PsbD, PsbE, PsbF, PsbH, PsbI, PsbJ, PsbK, PsbL, PsbM, PsbT, PsbX, PsbY, PsbZ, Psb30/Ycf12, at least 3 peripheral proteins of the oxygen-evolving complex and a large number of cofactors. It forms dimeric complexes. Binds multiple chlorophylls. PSII binds additional chlorophylls, carotenoids and specific lipids. serves as cofactor.

It is found in the plastid. The protein localises to the chloroplast thylakoid membrane. Its function is as follows. One of the components of the core complex of photosystem II (PSII). It binds chlorophyll and helps catalyze the primary light-induced photochemical processes of PSII. PSII is a light-driven water:plastoquinone oxidoreductase, using light energy to abstract electrons from H(2)O, generating O(2) and a proton gradient subsequently used for ATP formation. The chain is Photosystem II CP47 reaction center protein from Dioscorea elephantipes (Elephant's foot yam).